We begin with the raw amino-acid sequence, 288 residues long: MSVYRDESPATGLDHLKAALLYPLPHHAISRMVHWAVRVETPWFKNLLIKAFIRVFKVDMSEALEEDPTAYPTFNAFFTRALKPEARPLPDDPDAILSPADGTISQMGPIERDTIFQAKGHSFTTAELLGGDEALAEEFRDGWFATIYLSPRDYHRVHMPMTGTLRQMIHIPGRLFSVAPFTVRTVPKLFARNERVACIFDTDRGPMAVVLVGAINVGSIETVWAGEITPPAGIRAQYSNYEADNAPTIARGHEMGRFNMGSTVITLQNSRPAPGKIMSAHIKQGMTI.

Residues aspartate 101, histidine 158, and serine 262 each act as charge relay system; for autoendoproteolytic cleavage activity in the active site. Serine 262 acts as the Schiff-base intermediate with substrate; via pyruvic acid; for decarboxylase activity in catalysis. Serine 262 carries the post-translational modification Pyruvic acid (Ser); by autocatalysis.

The protein belongs to the phosphatidylserine decarboxylase family. PSD-B subfamily. Prokaryotic type I sub-subfamily. In terms of assembly, heterodimer of a large membrane-associated beta subunit and a small pyruvoyl-containing alpha subunit. Pyruvate is required as a cofactor. Post-translationally, is synthesized initially as an inactive proenzyme. Formation of the active enzyme involves a self-maturation process in which the active site pyruvoyl group is generated from an internal serine residue via an autocatalytic post-translational modification. Two non-identical subunits are generated from the proenzyme in this reaction, and the pyruvate is formed at the N-terminus of the alpha chain, which is derived from the carboxyl end of the proenzyme. The autoendoproteolytic cleavage occurs by a canonical serine protease mechanism, in which the side chain hydroxyl group of the serine supplies its oxygen atom to form the C-terminus of the beta chain, while the remainder of the serine residue undergoes an oxidative deamination to produce ammonia and the pyruvoyl prosthetic group on the alpha chain. During this reaction, the Ser that is part of the protease active site of the proenzyme becomes the pyruvoyl prosthetic group, which constitutes an essential element of the active site of the mature decarboxylase.

Its subcellular location is the cell membrane. The catalysed reaction is a 1,2-diacyl-sn-glycero-3-phospho-L-serine + H(+) = a 1,2-diacyl-sn-glycero-3-phosphoethanolamine + CO2. Its pathway is phospholipid metabolism; phosphatidylethanolamine biosynthesis; phosphatidylethanolamine from CDP-diacylglycerol: step 2/2. Its function is as follows. Catalyzes the formation of phosphatidylethanolamine (PtdEtn) from phosphatidylserine (PtdSer). This chain is Phosphatidylserine decarboxylase proenzyme, found in Alkalilimnicola ehrlichii (strain ATCC BAA-1101 / DSM 17681 / MLHE-1).